The chain runs to 471 residues: ATP synthase subunit beta (471 aa).

154-161 provides a ligand contact to ATP; that stretch reads GGAGVGKT.

The protein belongs to the ATPase alpha/beta chains family. In terms of assembly, F-type ATPases have 2 components, CF(1) - the catalytic core - and CF(0) - the membrane proton channel. CF(1) has five subunits: alpha(3), beta(3), gamma(1), delta(1), epsilon(1). CF(0) has three main subunits: a(1), b(2) and c(9-12). The alpha and beta chains form an alternating ring which encloses part of the gamma chain. CF(1) is attached to CF(0) by a central stalk formed by the gamma and epsilon chains, while a peripheral stalk is formed by the delta and b chains.

The protein resides in the cell membrane. The enzyme catalyses ATP + H2O + 4 H(+)(in) = ADP + phosphate + 5 H(+)(out). Its function is as follows. Produces ATP from ADP in the presence of a proton gradient across the membrane. The catalytic sites are hosted primarily by the beta subunits. The chain is ATP synthase subunit beta from Mesomycoplasma hyopneumoniae (strain 7448) (Mycoplasma hyopneumoniae).